We begin with the raw amino-acid sequence, 107 residues long: Stellacyanin (107 aa).

One can recognise a Phytocyanin domain in the interval 1–105 (TVYTVGDSAG…GQKVHINVTV (105 aa)). An N-linked (GlcNAc...) asparagine glycan is attached at N28. H46 serves as a coordination point for Cu cation. C59 and C93 form a disulfide bridge. N-linked (GlcNAc...) asparagine glycosylation occurs at N60. Positions 87, 92, and 97 each coordinate Cu cation. N102 is a glycosylation site (N-linked (GlcNAc...) asparagine).

The chain is Stellacyanin from Toxicodendron vernicifluum (Japanese lacquer tree).